Consider the following 295-residue polypeptide: Aspartate carbamoyltransferase catalytic subunit (295 aa).

Carbamoyl phosphate-binding residues include Arg-49 and Thr-50. Lys-77 contributes to the L-aspartate binding site. Arg-99, His-127, and Gln-130 together coordinate carbamoyl phosphate. L-aspartate is bound by residues Arg-161 and Arg-212. Residues Gly-251 and Pro-252 each coordinate carbamoyl phosphate.

Belongs to the aspartate/ornithine carbamoyltransferase superfamily. ATCase family. Heterododecamer (2C3:3R2) of six catalytic PyrB chains organized as two trimers (C3), and six regulatory PyrI chains organized as three dimers (R2).

It carries out the reaction carbamoyl phosphate + L-aspartate = N-carbamoyl-L-aspartate + phosphate + H(+). It functions in the pathway pyrimidine metabolism; UMP biosynthesis via de novo pathway; (S)-dihydroorotate from bicarbonate: step 2/3. Its function is as follows. Catalyzes the condensation of carbamoyl phosphate and aspartate to form carbamoyl aspartate and inorganic phosphate, the committed step in the de novo pyrimidine nucleotide biosynthesis pathway. This chain is Aspartate carbamoyltransferase catalytic subunit, found in Aliarcobacter butzleri (strain RM4018) (Arcobacter butzleri).